The sequence spans 344 residues: MGWWSLGSSGSKADPEKSKANDSKSSNRRQQEEGEQSFIPPPLTSRTSSSSSSKSTTDWNSSLNAFDWSQFKQPRNLIPTALLTGGILFVVYVQRRYLRRFPEATDISSSYFRSRSLLGRVTSVGDGDNFRIFHTPGGRLVGWGWLPWMKVPTARKELKDKTVHIRLAGVDAPELAHFGRPAQPYAYEAHMWLTSYLMNRRVRAYVHRPDQYKRVIATVYVRRWLDFPPLRRRDVSYEMLRRGLATVYEAKSGVEFGGTENERKYREAEMLAKNRRQGLWKDFGKRGGVNFESPREYKTRMQSLDMSAESSSSSSSSSNTEKNPGLVGSLLRKVWPFGSKKDGT.

Residues 1-11 show a composition bias toward polar residues; it reads MGWWSLGSSGS. Residues 1–55 form a disordered region; that stretch reads MGWWSLGSSGSKADPEKSKANDSKSSNRRQQEEGEQSFIPPPLTSRTSSSSSSKS. Residues 13–22 show a composition bias toward basic and acidic residues; sequence ADPEKSKAND. Positions 44–55 are enriched in low complexity; it reads TSRTSSSSSSKS. A helical transmembrane segment spans residues 77 to 93; it reads LIPTALLTGGILFVVYV. The region spanning 115–282 is the TNase-like domain; sequence RSLLGRVTSV…KNRRQGLWKD (168 aa). The active site involves Arg166. Position 171 (Asp171) interacts with Ca(2+). Residues Glu174 and Arg214 contribute to the active site. Residues 291-327 are disordered; the sequence is FESPREYKTRMQSLDMSAESSSSSSSSSNTEKNPGLV. The span at 300–309 shows a compositional bias: polar residues; that stretch reads RMQSLDMSAE.

The protein belongs to the LCL3 family.

The protein resides in the mitochondrion. It localises to the membrane. The sequence is that of Probable endonuclease lcl3 (lcl3) from Talaromyces marneffei (strain ATCC 18224 / CBS 334.59 / QM 7333) (Penicillium marneffei).